Consider the following 32-residue polypeptide: Giant hemoglobin AIV chain (32 aa).

This sequence belongs to the globin family. In terms of assembly, giant hemoglobin is composed of four heme-containing chains (AI to AIV), and two linker chains (AV and AVI).

The polypeptide is Giant hemoglobin AIV chain (Lamellibrachia sp. (Deep-sea giant tube worm)).